The sequence spans 113 residues: GGPGCGNGNNGNGNYGYGNGNGNGNGYGNSNGNGNGCGPDGKGPGCNSVSSAGTLSSYGQVVGSNVYSANGCGPDGKGPGCQVKPLSLPKYFFRKSSQYPRRKNCSPNEIGCN.

In terms of tissue distribution, component of the organic matrix of calcified shell layers.

This chain is Gigasin-5, found in Magallana gigas (Pacific oyster).